Here is a 319-residue protein sequence, read N- to C-terminus: ADP-ribosyl cyclase/cyclic ADP-ribose hydrolase 2 (319 aa).

Residues 1-33 form the signal peptide; it reads MAVQACALSLRLGLWMSLLLPVLPGAGARAAGA. Cystine bridges form between cysteine 52–cysteine 68, cysteine 84–cysteine 164, and cysteine 145–cysteine 158. 2 N-linked (GlcNAc...) asparagine glycosylation sites follow: asparagine 67 and asparagine 96. NAD(+) is bound at residue tryptophan 110. Residue tryptophan 110 coordinates nicotinamide. An N-linked (GlcNAc...) asparagine glycan is attached at asparagine 149. Tryptophan 173 is a binding site for NAD(+). N-linked (GlcNAc...) asparagine glycosylation is present at asparagine 193. Glutamate 211 serves as a coordination point for NAD(+). 2 disulfide bridges follow: cysteine 239/cysteine 260 and cysteine 272/cysteine 281. Residue serine 294 is the site of GPI-anchor amidated serine attachment. Residues 295–319 constitute a propeptide that is removed on maturation; that stretch reads PALHAIGDISLIISLLVALASSSQA.

This sequence belongs to the ADP-ribosyl cyclase family. As to quaternary structure, homodimer. In terms of tissue distribution, pancreatic islets, kidney, spleen, heart, thymus, intestine and salivary gland.

It is found in the cell membrane. It catalyses the reaction NAD(+) + H2O = ADP-D-ribose + nicotinamide + H(+). The catalysed reaction is NAD(+) = cyclic ADP-beta-D-ribose + nicotinamide + H(+). The enzyme catalyses cyclic ADP-beta-D-ribose + H2O = ADP-D-ribose. Catalyzes both the synthesis of cyclic ADP-beta-D-ribose (cADPR) from NAD(+), and its hydrolysis to ADP-D-ribose (ADPR). Cyclic ADPR is known to serve as an endogenous second messenger that elicits calcium release from intracellular stores, and thus regulates the mobilization of intracellular calcium. May be involved in pre-B-cell growth. In Rattus norvegicus (Rat), this protein is ADP-ribosyl cyclase/cyclic ADP-ribose hydrolase 2 (Bst1).